The chain runs to 121 residues: Large ribosomal subunit protein uL18 (121 aa).

This sequence belongs to the universal ribosomal protein uL18 family. As to quaternary structure, part of the 50S ribosomal subunit; part of the 5S rRNA/L5/L18/L25 subcomplex. Contacts the 5S and 23S rRNAs.

Functionally, this is one of the proteins that bind and probably mediate the attachment of the 5S RNA into the large ribosomal subunit, where it forms part of the central protuberance. The sequence is that of Large ribosomal subunit protein uL18 from Paraburkholderia xenovorans (strain LB400).